A 422-amino-acid polypeptide reads, in one-letter code: uncharacterized protein (422 aa).

Belongs to the N(4)/N(6)-methyltransferase family.

It carries out the reaction a 2'-deoxyadenosine in DNA + S-adenosyl-L-methionine = an N(6)-methyl-2'-deoxyadenosine in DNA + S-adenosyl-L-homocysteine + H(+). This is an uncharacterized protein from Mycoplasma pneumoniae (strain ATCC 29342 / M129 / Subtype 1) (Mycoplasmoides pneumoniae).